A 47-amino-acid polypeptide reads, in one-letter code: NADH dehydrogenase [ubiquinone] iron-sulfur protein 2 (47 aa).

It belongs to the complex I 49 kDa subunit family. Complex I is composed of about 45 different subunits. This is a component of the iron-sulfur (IP) fragment of the enzyme.

Its subcellular location is the mitochondrion inner membrane. The catalysed reaction is a ubiquinone + NADH + 5 H(+)(in) = a ubiquinol + NAD(+) + 4 H(+)(out). Its function is as follows. Core subunit of the mitochondrial membrane respiratory chain NADH dehydrogenase (Complex I) that is believed to belong to the minimal assembly required for catalysis. Complex I functions in the transfer of electrons from NADH to the respiratory chain. The immediate electron acceptor for the enzyme is believed to be ubiquinone. Component of the iron-sulfur (IP) fragment of the enzyme. This Solanum tuberosum (Potato) protein is NADH dehydrogenase [ubiquinone] iron-sulfur protein 2 (NAD7).